A 94-amino-acid polypeptide reads, in one-letter code: ESAT-6-like protein EsxL (94 aa).

The protein belongs to the WXG100 family. ESAT-6 subfamily. Strongly interacts with EsxK to form a heterodimeric complex under reducing conditions. The complex is regulated by the redox state of EsxL.

The protein localises to the secreted. Its function is as follows. Induces apoptosis of host cells. Is immunogenic with highly specific seroreactivity towards TB patients' serum. This is ESAT-6-like protein EsxL from Mycobacterium tuberculosis (strain ATCC 25618 / H37Rv).